The primary structure comprises 92 residues: MKLCVTVLSLLMLVAAFCSPALSAPMGSDPPTACCFSYTARKLPRNFVVDYYETSSLCSQPAVVFQTKRSKQVCADPSESWVQEYVYDLELN.

A signal peptide spans 1–23; the sequence is MKLCVTVLSLLMLVAAFCSPALS. 2 disulfide bridges follow: cysteine 34/cysteine 58 and cysteine 35/cysteine 74.

The protein belongs to the intercrine beta (chemokine CC) family. As to quaternary structure, homodimer and heterodimer of MIP-1-alpha(4-69) and MIP-1-beta(3-69). In terms of processing, N-terminal processed form MIP-1-beta(3-69) is produced by proteolytic cleavage after secretion from peripheral blood lymphocytes.

The protein localises to the secreted. Functionally, monokine with inflammatory and chemokinetic properties. Binds to CCR5. One of the major HIV-suppressive factors produced by CD8+ T-cells. Recombinant MIP-1-beta induces a dose-dependent inhibition of different strains of HIV-1, HIV-2, and simian immunodeficiency virus (SIV). The processed form MIP-1-beta(3-69) retains the abilities to induce down-modulation of surface expression of the chemokine receptor CCR5 and to inhibit the CCR5-mediated entry of HIV-1 in T-cells. MIP-1-beta(3-69) is also a ligand for CCR1 and CCR2 isoform B. The protein is C-C motif chemokine 4 (CCL4) of Homo sapiens (Human).